Here is a 548-residue protein sequence, read N- to C-terminus: MRLRNGTFLTLLLFCLCAFLSLSWYAALSGQKGDVVDIYQREFLALRDRLHAAEQESLKRSKELNLVLEEIKRAVSERQALRDGEGNRTWGRLTEDPRLKPWNVSHRHVLHLPTVFHHLPHLLAKESSLQPAVRVGQGRTGVSVVMGIPSVRREVHSYLTDTLHSLISELSPQEKEDSVIVVLIAETDPQYTSAVTENIKALFPTEIHSGLLEVISPSPHFYPDFSRLRESFGDPKERVRWRTKQNLDYCFLMMYAQSKGIYYVQLEDDIVAKPNYLSTMKNFALQQPSEDWMILEFSQLGFIGKMFKSLDLSLIVEFILMFYRDKPIDWLLDHILWVKVCNPEKDAKHCDRQKANLRIRFKPSLFQHVGTHSSLAGKIQKLKDKDFGKHALRKEHVNPPAEVSTSLKTYQHFTLEKAYLREDFFWAFTPAAGDFIRFRFFQPLRLERFFFRSGNIEHPEDKLFNTSVEVLPFDNPQSEKEALQEGRSATLRYPRSPDGYLQIGSFYKGVAEGEVDPAFGPLEALRLSIQTDSPVWVILSEIFLKKAD.

The Cytoplasmic segment spans residues 1 to 7 (MRLRNGT). The chain crosses the membrane as a helical; Signal-anchor for type II membrane protein span at residues 8 to 28 (FLTLLLFCLCAFLSLSWYAAL). The Lumenal portion of the chain corresponds to 29–548 (SGQKGDVVDI…LSEIFLKKAD (520 aa)). Positions 36 to 83 (VDIYQREFLALRDRLHAAEQESLKRSKELNLVLEEIKRAVSERQALRD) form a coiled coil. N-linked (GlcNAc...) asparagine glycans are attached at residues Asn-87 and Asn-103.

This sequence belongs to the glycosyltransferase 54 family. As to quaternary structure, interacts with SLC35A3. The cofactor is a divalent metal cation. In terms of processing, N-glycosylated.

It localises to the golgi apparatus membrane. It carries out the reaction N(4)-{beta-D-GlcNAc-(1-&gt;2)-alpha-D-Man-(1-&gt;3)-[beta-D-GlcNAc-(1-&gt;2)-alpha-D-Man-(1-&gt;6)]-beta-D-Man-(1-&gt;4)-beta-D-GlcNAc-(1-&gt;4)-beta-D-GlcNAc}-L-asparaginyl-[protein] + UDP-N-acetyl-alpha-D-glucosamine = N(4)-{beta-D-GlcNAc-(1-&gt;2)-[beta-D-GlcNAc-(1-&gt;4)]-alpha-D-Man-(1-&gt;3)-[beta-D-GlcNAc-(1-&gt;2)-alpha-D-Man-(1-&gt;6)]-beta-D-Man-(1-&gt;4)-beta-D-GlcNAc-(1-&gt;4)-beta-D-GlcNAc}-L-asparaginyl-[protein] + UDP + H(+). The enzyme catalyses an N(4)-{beta-D-GlcNAc-(1-&gt;2)-alpha-D-Man-(1-&gt;3)-[alpha-D-Man-(1-&gt;6)]-beta-D-Man-(1-&gt;4)-beta-D-GlcNAc-(1-&gt;4)-beta-D-GlcNAc}-L-asparaginyl-[protein] + UDP-N-acetyl-alpha-D-glucosamine = an N(4)-{beta-D-GlcNAc-(1-&gt;2)-[beta-D-GlcNAc-(1-&gt;4)]-alpha-D-Man-(1-&gt;3)-[alpha-D-Man-(1-&gt;6)]-beta-D-Man-(1-&gt;4)-beta-D-GlcNAc-(1-&gt;4)-beta-D-GlcNAc}-L-asparaginyl-[protein] + UDP + H(+). The catalysed reaction is an N(4)-{beta-D-GlcNAc-(1-&gt;2)-alpha-D-Man-(1-&gt;3)-[beta-D-GlcNAc-(1-&gt;2)-[beta-D-GlcNAc-(1-&gt;6)]-alpha-D-Man-(1-&gt;6)]-beta-D-Man-(1-&gt;4)-beta-D-GlcNAc-(1-&gt;4)-beta-D-GlcNAc}-L-asparaginyl-[protein] + UDP-N-acetyl-alpha-D-glucosamine = an N(4)-{beta-D-GlcNAc-(1-&gt;2)-[beta-D-GlcNAc-(1-&gt;4)]-alpha-D-Man-(1-&gt;3)-[beta-D-GlcNAc-(1-&gt;2)-[beta-D-GlcNAc-(1-&gt;6)]-alpha-D-Man-(1-&gt;6)]-beta-D-Man-(1-&gt;4)-beta-D-GlcNAc-(1-&gt;4)-beta-D-GlcNAc}-L-asparaginyl-[protein] + UDP + H(+). It catalyses the reaction an N(4)-{beta-D-GlcNAc-(1-&gt;2)-alpha-D-Man-(1-&gt;3)-[beta-D-GlcNAc-(1-&gt;2)-alpha-D-Man-(1-&gt;6)]-beta-D-Man-(1-&gt;4)-beta-D-GlcNAc-(1-&gt;4)-[alpha-L-Fuc-(1-&gt;6)]-beta-D-GlcNAc}-L-asparaginyl-[protein] + UDP-N-acetyl-alpha-D-glucosamine = N(4)-{beta-D-GlcNAc-(1-&gt;2)-[beta-D-GlcNAc-(1-&gt;4)]-alpha-D-Man-(1-&gt;3)-[beta-D-GlcNAc-(1-&gt;2)-alpha-D-Man-(1-&gt;6)]-beta-D-Man-(1-&gt;4)-beta-D-GlcNAc-(1-&gt;4)-[alpha-L-Fuc-(1-&gt;6)]-beta-D-GlcNAc}-asparaginyl-[protein] + UDP + H(+). It carries out the reaction an N(4)-{beta-D-GlcNAc-(1-&gt;2)-alpha-D-Man-(1-&gt;3)-[beta-D-Gal-(1-&gt;4)-beta-D-GlcNAc-(1-&gt;2)-alpha-D-Man-(1-&gt;6)]-beta-D-Man-(1-&gt;4)-beta-D-GlcNAc-(1-&gt;4)-beta-D-GlcNAc}-L-asparaginyl-[protein] + UDP-N-acetyl-alpha-D-glucosamine = an N(4)-{beta-D-GlcNAc-(1-&gt;2)-[beta-D-GlcNAc-(1-&gt;4)]-alpha-D-Man-(1-&gt;3)-[beta-D-Gal-(1-&gt;4)-beta-D-GlcNAc-(1-&gt;2)-alpha-D-Man-(1-&gt;6)]-beta-D-Man-(1-&gt;4)-beta-D-GlcNAc-(1-&gt;4)-beta-D-GlcNAc}-L-asparaginyl-[protein] + UDP + H(+). The enzyme catalyses N(4)-{beta-D-GlcNAc-(1-&gt;2)-alpha-D-Man-(1-&gt;3)-[alpha-D-Man-(1-&gt;3)-{alpha-D-Man-(1-&gt;6)}-alpha-D-Man-(1-&gt;6)]-beta-D-Man-(1-&gt;4)-beta-D-GlcNAc-(1-&gt;4)-beta-D-GlcNAc}-asparaginyl-[protein] + UDP-N-acetyl-alpha-D-glucosamine = N(4)-{beta-D-GlcNAc-(1-&gt;2)-[beta-D-GlcNAc-(1-&gt;4)]-alpha-D-Man-(1-&gt;3)-[alpha-D-Man-(1-&gt;3)-{alpha-D-Man-(1-&gt;6)}-alpha-D-Man-(1-&gt;6)]-beta-D-Man-(1-&gt;4)-beta-D-GlcNAc-(1-&gt;4)-beta-D-GlcNAc}-asparaginyl-[protein] + UDP + H(+). The catalysed reaction is N(4)-{beta-D-GlcNAc-(1-&gt;2)-alpha-D-Man-(1-&gt;3)-beta-D-Man-(1-&gt;4)-beta-D-GlcNAc-(1-&gt;4)-beta-D-GlcNAc}-asparaginyl-[protein] + UDP-N-acetyl-alpha-D-glucosamine = N(4)-{beta-D-GlcNAc-(1-&gt;2)-[beta-D-GlcNAc-(1-&gt;4)]-alpha-D-Man-(1-&gt;3)-beta-D-Man-(1-&gt;4)-beta-D-GlcNAc-(1-&gt;4)-beta-D-GlcNAc}-asparaginyl-[protein] + UDP + H(+). Its pathway is protein modification; protein glycosylation. Its function is as follows. Glycosyltransferase that catalyzes the transfer of GlcNAc from UDP-GlcNAc to the GlcNAcbeta1-2Manalpha1-3 arm of the core structure of N-linked glycans through a beta1-4 linkage and participates in the production of tri- and tetra-antennary N-linked sugar chains. Prefers complex-type N-glycans over hybrid-types. Has lower affinities for donors or acceptors than MGAT4A, suggesting that, under physiological conditions, it is not the main contributor in N-glycan biosynthesis. This is Alpha-1,3-mannosyl-glycoprotein 4-beta-N-acetylglucosaminyltransferase B from Mus musculus (Mouse).